Consider the following 316-residue polypeptide: Pantothenate kinase (316 aa).

95-102 (GSVAVGKS) contacts ATP.

Belongs to the prokaryotic pantothenate kinase family.

The protein localises to the cytoplasm. The enzyme catalyses (R)-pantothenate + ATP = (R)-4'-phosphopantothenate + ADP + H(+). The protein operates within cofactor biosynthesis; coenzyme A biosynthesis; CoA from (R)-pantothenate: step 1/5. The sequence is that of Pantothenate kinase from Shewanella halifaxensis (strain HAW-EB4).